The sequence spans 98 residues: C-X-C motif chemokine 10 (98 aa).

Residues 1–21 form the signal peptide; sequence MNQTAILICCLIFLTLSGIQG. R26 carries the post-translational modification Citrulline; by PAD2. Cystine bridges form between C30/C57 and C32/C74.

Belongs to the intercrine alpha (chemokine CxC) family. In terms of assembly, monomer, dimer, and tetramer. Interacts with CXCR3 (via N-terminus). Several proteases can mediate post-secretion cleavages. DPP4 cleaves CXCL10 on its N-terminal 2 amino acids leading to an antagonist form of CXCL10. This dominant negative form is capable of binding CXCR3 but does not induce signaling. MMP9 cleaves 9 amino acids instead. Mainly secreted by monocytes, endothelial cells as well as fibroblasts. Expressed by epithelial cells in thymus. Microglial cells produce CXCL10 in response to viral stimulation.

The protein localises to the secreted. Its function is as follows. Pro-inflammatory cytokine that is involved in a wide variety of processes such as chemotaxis, differentiation, and activation of peripheral immune cells, regulation of cell growth, apoptosis and modulation of angiostatic effects. Plays thereby an important role during viral infections by stimulating the activation and migration of immune cells to the infected sites. Mechanistically, binding of CXCL10 to the CXCR3 receptor activates G protein-mediated signaling and results in downstream activation of phospholipase C-dependent pathway, an increase in intracellular calcium production and actin reorganization. In turn, recruitment of activated Th1 lymphocytes occurs at sites of inflammation. Activation of the CXCL10/CXCR3 axis also plays an important role in neurons in response to brain injury for activating microglia, the resident macrophage population of the central nervous system, and directing them to the lesion site. This recruitment is an essential element for neuronal reorganization. The chain is C-X-C motif chemokine 10 (CXCL10) from Homo sapiens (Human).